Reading from the N-terminus, the 543-residue chain is Phosphoenolpyruvate carboxykinase (ATP) (543 aa).

244-251 (GLSGTGKT) provides a ligand contact to ATP.

Belongs to the phosphoenolpyruvate carboxykinase (ATP) family.

It catalyses the reaction oxaloacetate + ATP = phosphoenolpyruvate + ADP + CO2. Its pathway is carbohydrate biosynthesis; gluconeogenesis. The polypeptide is Phosphoenolpyruvate carboxykinase (ATP) (PCK1) (Kluyveromyces lactis (strain ATCC 8585 / CBS 2359 / DSM 70799 / NBRC 1267 / NRRL Y-1140 / WM37) (Yeast)).